Consider the following 317-residue polypeptide: Forkhead box protein B2 (317 aa).

The fork-head DNA-binding region spans 13-107 (KPPYSYISLT…ENGSFLRRRK (95 aa)).

First expressed within the dorsolateral ectoderm, except for the organizer territory. During gastrulation, expressed in 2 ectodermal stripes adjacent to the dorsal midline. With the onset of neurulation, expression shifts first to the neural plate before settling on the bottom of the neural tube, on top of the notochord. Expression is then absent until stage 35, at which stage a pair of cells in the fourth rhombomere in the dorsolateral outer area of the rhombencephalon show expression. This is followed shortly afterwards by expression in a pair of cells in rhombomere 6 at the ventricular side of the rhombencephalon.

It localises to the nucleus. In terms of biological role, transcription factor. In Xenopus laevis (African clawed frog), this protein is Forkhead box protein B2.